The primary structure comprises 240 residues: Biosynthetic peptidoglycan transglycosylase (240 aa).

A helical transmembrane segment spans residues 27 to 47 (VVLLFFFAVFALLLIFRFVPI).

The protein belongs to the glycosyltransferase 51 family.

The protein resides in the cell inner membrane. It carries out the reaction [GlcNAc-(1-&gt;4)-Mur2Ac(oyl-L-Ala-gamma-D-Glu-L-Lys-D-Ala-D-Ala)](n)-di-trans,octa-cis-undecaprenyl diphosphate + beta-D-GlcNAc-(1-&gt;4)-Mur2Ac(oyl-L-Ala-gamma-D-Glu-L-Lys-D-Ala-D-Ala)-di-trans,octa-cis-undecaprenyl diphosphate = [GlcNAc-(1-&gt;4)-Mur2Ac(oyl-L-Ala-gamma-D-Glu-L-Lys-D-Ala-D-Ala)](n+1)-di-trans,octa-cis-undecaprenyl diphosphate + di-trans,octa-cis-undecaprenyl diphosphate + H(+). It functions in the pathway cell wall biogenesis; peptidoglycan biosynthesis. Functionally, peptidoglycan polymerase that catalyzes glycan chain elongation from lipid-linked precursors. The sequence is that of Biosynthetic peptidoglycan transglycosylase from Haemophilus influenzae (strain PittEE).